Here is a 368-residue protein sequence, read N- to C-terminus: Zinc finger protein 24 (368 aa).

Lys-22 participates in a covalent cross-link: Glycyl lysine isopeptide (Lys-Gly) (interchain with G-Cter in SUMO2). Residue Lys-27 forms a Glycyl lysine isopeptide (Lys-Gly) (interchain with G-Cter in SUMO1); alternate linkage. Residue Lys-27 forms a Glycyl lysine isopeptide (Lys-Gly) (interchain with G-Cter in SUMO2); alternate linkage. Residues 52 to 134 (RQRFRQFGYQ…TVLEDLESEL (83 aa)) form the SCAN box domain. Ser-132 and Ser-142 each carry phosphoserine. Residues Lys-147, Lys-177, and Lys-236 each participate in a glycyl lysine isopeptide (Lys-Gly) (interchain with G-Cter in SUMO2) cross-link. The segment at 251–273 (HICDECGKHFSQGSALILHQRIH) adopts a C2H2-type 1 zinc-finger fold. The interval 251–301 (HICDECGKHFSQGSALILHQRIHSGEKPYGCVECGKAFSRSSILVQHQRVH) is necessary and sufficient for nuclear localization. The residue at position 274 (Ser-274) is a Phosphoserine. Residues Lys-277 and Lys-286 each participate in a glycyl lysine isopeptide (Lys-Gly) (interchain with G-Cter in SUMO2) cross-link. 3 consecutive C2H2-type zinc fingers follow at residues 279–301 (YGCV…QRVH), 307–329 (YKCL…QRIH), and 335–357 (YECV…QRRH). Ser-292 is subject to Phosphoserine. The residue at position 335 (Tyr-335) is a Phosphotyrosine. Glycyl lysine isopeptide (Lys-Gly) (interchain with G-Cter in SUMO2) cross-links involve residues Lys-361 and Lys-367.

Belongs to the krueppel C2H2-type zinc-finger protein family. Sumoylated.

It localises to the nucleus. In terms of biological role, transcription factor required for myelination of differentiated oligodendrocytes. Required for the conversion of oligodendrocytes from the premyelinating to the myelinating state. In the developing central nervous system (CNS), involved in the maintenance in the progenitor stage by promoting the cell cycle. Specifically binds to the 5'-TCAT-3' DNA sequence. Has transcription repressor activity in vitro. This Pongo abelii (Sumatran orangutan) protein is Zinc finger protein 24 (ZNF24).